Consider the following 156-residue polypeptide: Ribonuclease H (156 aa).

Residues 3 to 144 form the RNase H type-1 domain; it reads ERKLIHIFTD…CDILARSAAE (142 aa). 4 residues coordinate Mg(2+): D12, E50, D72, and D136.

This sequence belongs to the RNase H family. Monomer. Mg(2+) serves as cofactor.

Its subcellular location is the cytoplasm. The catalysed reaction is Endonucleolytic cleavage to 5'-phosphomonoester.. Its function is as follows. Endonuclease that specifically degrades the RNA of RNA-DNA hybrids. In Shewanella putrefaciens (strain CN-32 / ATCC BAA-453), this protein is Ribonuclease H.